We begin with the raw amino-acid sequence, 354 residues long: Molybdenum import ATP-binding protein ModC (354 aa).

The ABC transporter domain occupies 1–229; it reads MLELDFEQQL…SALRLWLQKE (229 aa). 31–38 contacts ATP; sequence GLSGAGKT. Residues 289 to 354 form the Mop domain; the sequence is GSSIRNILAV…IKSVSFHRQL (66 aa).

It belongs to the ABC transporter superfamily. Molybdate importer (TC 3.A.1.8) family. In terms of assembly, the complex is composed of two ATP-binding proteins (ModC), two transmembrane proteins (ModB) and a solute-binding protein (ModA).

It is found in the cell inner membrane. It carries out the reaction molybdate(out) + ATP + H2O = molybdate(in) + ADP + phosphate + H(+). In terms of biological role, part of the ABC transporter complex ModABC involved in molybdenum import. Responsible for energy coupling to the transport system. The chain is Molybdenum import ATP-binding protein ModC from Photorhabdus laumondii subsp. laumondii (strain DSM 15139 / CIP 105565 / TT01) (Photorhabdus luminescens subsp. laumondii).